Consider the following 231-residue polypeptide: Ribonuclease 3 (231 aa).

Residues 5-134 (QKKLKNDYGL…FLGALFIDQG (130 aa)) form the RNase III domain. E47 is a Mg(2+) binding site. D51 is a catalytic residue. N120 and E123 together coordinate Mg(2+). The active site involves E123. In terms of domain architecture, DRBM spans 160 to 229 (DYKTELQEVL…AENAIKGQNH (70 aa)).

It belongs to the ribonuclease III family. As to quaternary structure, homodimer. Mg(2+) is required as a cofactor.

It is found in the cytoplasm. It carries out the reaction Endonucleolytic cleavage to 5'-phosphomonoester.. Its function is as follows. Digests double-stranded RNA. Involved in the processing of primary rRNA transcript to yield the immediate precursors to the large and small rRNAs (23S and 16S). Processes some mRNAs, and tRNAs when they are encoded in the rRNA operon. Processes pre-crRNA and tracrRNA of type II CRISPR loci if present in the organism. This Lactococcus lactis subsp. cremoris (strain MG1363) protein is Ribonuclease 3.